The chain runs to 695 residues: MAP kinase phosphatase with leucine-rich repeats protein 2 (695 aa).

10 LRR repeats span residues 101 to 122, 124 to 145, 147 to 167, 170 to 191, 193 to 214, 215 to 235, 239 to 260, 262 to 283, 286 to 307, and 309 to 330; these read SLKS…ITLL, NLNH…LSQL, SLET…NVCK, SLTS…FLNL, NLKD…LPNN, IEKL…SLIR, SLTT…LSCL, NVKT…VLGS, SLVT…VILL, and NLRI…IPTE. Positions 413-426 are enriched in low complexity; it reads SENNEINENNQLLT. Disordered stretches follow at residues 413 to 438 and 492 to 519; these read SENN…KNDS and QEQL…QQQQ. In terms of domain architecture, Tyrosine-protein phosphatase spans 556–695; that stretch reads VPDLIIDKLY…LKKFEKDLFK (140 aa). Cysteine 639 acts as the Phosphocysteine intermediate in catalysis.

It belongs to the protein-tyrosine phosphatase family. Non-receptor class dual specificity subfamily.

It catalyses the reaction O-phospho-L-tyrosyl-[protein] + H2O = L-tyrosyl-[protein] + phosphate. The enzyme catalyses O-phospho-L-seryl-[protein] + H2O = L-seryl-[protein] + phosphate. It carries out the reaction O-phospho-L-threonyl-[protein] + H2O = L-threonyl-[protein] + phosphate. In terms of biological role, probable phosphatase with dual specificity toward Ser/Thr and Tyr-containing proteins. The protein is MAP kinase phosphatase with leucine-rich repeats protein 2 (mpl2) of Dictyostelium discoideum (Social amoeba).